Reading from the N-terminus, the 360-residue chain is uncharacterized protein (360 aa).

Solcar repeat units lie at residues 34 to 153 (VGVL…LSVW), 172 to 256 (PDWS…FKTN), and 266 to 355 (NPFV…FKFL). The next 6 membrane-spanning stretches (helical) occupy residues 40 to 60 (VSAS…LDVV), 125 to 145 (LWSG…FYFT), 178 to 198 (AVAG…IEMI), 225 to 247 (ISSF…GIYW), 269 to 289 (VVSF…THPF), and 327 to 348 (FSSG…MISF).

It belongs to the mitochondrial carrier (TC 2.A.29) family.

Its subcellular location is the mitochondrion inner membrane. This is an uncharacterized protein from Caenorhabditis elegans.